A 363-amino-acid polypeptide reads, in one-letter code: Phosphoserine aminotransferase (363 aa).

R42 is a binding site for L-glutamate. Pyridoxal 5'-phosphate is bound by residues 76–77 (GR), W102, T156, D175, and Q198. K199 carries the N6-(pyridoxal phosphate)lysine modification. 240 to 241 (NT) is a binding site for pyridoxal 5'-phosphate.

It belongs to the class-V pyridoxal-phosphate-dependent aminotransferase family. SerC subfamily. In terms of assembly, homodimer. Requires pyridoxal 5'-phosphate as cofactor.

It localises to the cytoplasm. It carries out the reaction O-phospho-L-serine + 2-oxoglutarate = 3-phosphooxypyruvate + L-glutamate. It catalyses the reaction 4-(phosphooxy)-L-threonine + 2-oxoglutarate = (R)-3-hydroxy-2-oxo-4-phosphooxybutanoate + L-glutamate. The protein operates within amino-acid biosynthesis; L-serine biosynthesis; L-serine from 3-phospho-D-glycerate: step 2/3. Its pathway is cofactor biosynthesis; pyridoxine 5'-phosphate biosynthesis; pyridoxine 5'-phosphate from D-erythrose 4-phosphate: step 3/5. Catalyzes the reversible conversion of 3-phosphohydroxypyruvate to phosphoserine and of 3-hydroxy-2-oxo-4-phosphonooxybutanoate to phosphohydroxythreonine. The chain is Phosphoserine aminotransferase from Shewanella denitrificans (strain OS217 / ATCC BAA-1090 / DSM 15013).